Here is a 481-residue protein sequence, read N- to C-terminus: MLELSAFELAERVLAREVSASEAAAAANARVEEVEGDLNSFITGTPELALERAARVDERLRRGEEVRPWECVPIAVKDVLSTRGVRTTCGSRILENFEPVYEASALLSFGPDPIMVGKANMDEFAMGSSTENSAYGPTRNPWDLSRVPGGSSGGSAAAVAAGQGWWALGTDTGGSVRQPASFCGLVGLKPTYGRVSRYGLIAFASSLDQIGPMTRDVRDAALLLQAIAGHDPKDSTSAGVEVPDYLSGLERGVEGLRVGIVRELVEAEGVEGEVREISLRTARALEEAGARVGEVSLPHAGYGLPAYYIIAPAEVSSNLARYDGVRYGLRVPADGVHEMYRRTRERGFGDEVKRRIMLGTYALSAGYYEAYYGQAQKVRTRIIEDFRNAFSGYDVLLSPTCPTTAFGLGEKVDDPLAMYANDICAVPASLAGIPAISVPGGLSGGLPVGVQLMGDYFSEPTLLRAARAAEQASGLRFRLKP.

Active-site charge relay system residues include Lys-77 and Ser-151. Ser-175 functions as the Acyl-ester intermediate in the catalytic mechanism.

This sequence belongs to the amidase family. GatA subfamily. Heterotrimer of A, B and C subunits.

The catalysed reaction is L-glutamyl-tRNA(Gln) + L-glutamine + ATP + H2O = L-glutaminyl-tRNA(Gln) + L-glutamate + ADP + phosphate + H(+). Its function is as follows. Allows the formation of correctly charged Gln-tRNA(Gln) through the transamidation of misacylated Glu-tRNA(Gln) in organisms which lack glutaminyl-tRNA synthetase. The reaction takes place in the presence of glutamine and ATP through an activated gamma-phospho-Glu-tRNA(Gln). The sequence is that of Glutamyl-tRNA(Gln) amidotransferase subunit A from Rubrobacter xylanophilus (strain DSM 9941 / JCM 11954 / NBRC 16129 / PRD-1).